The chain runs to 1214 residues: Sodium bicarbonate cotransporter 3 (1214 aa).

Residues 1–12 (MERFRLEKKLPG) show a composition bias toward basic and acidic residues. 2 disordered regions span residues 1–22 (MERF…VDLG) and 52–93 (SKES…PSQR). The Extracellular segment spans residues 1-608 (MERFRLEKKL…DFKDALSLQC (608 aa)). 6 positions are modified to phosphoserine: Ser52, Ser55, Ser84, Ser150, Leu165, and Cys168. Basic residues predominate over residues 55 to 72 (SRRRHRHRGHKHHHRRRK). Over residues 73–85 (DKESDKEDGRESP) the composition is skewed to basic and acidic residues. Asn171 carries N-linked (GlcNAc...) asparagine glycosylation. Phosphoserine occurs at positions 233, 242, 255, 258, 260, 263, 264, and 267. An N-linked (GlcNAc...) asparagine glycan is attached at Asn269. 3 disordered regions span residues 289–346 (SRAG…IPTV), 362–408 (EEQK…ENST), and 552–572 (FHNG…HHAG). Over residues 303–313 (VPTPQNSPPSS) the composition is skewed to pro residues. Residues 314–332 (PSISRLTSRSSQESQRQAP) are compositionally biased toward low complexity. A compositionally biased stretch (polar residues) spans 379-392 (SPQSAPGNLDNSKS). Ser382 bears the Phosphoserine mark. Asn398 carries an N-linked (GlcNAc...) asparagine glycan. Phosphoserine occurs at positions 400 and 403. Asn406 carries an N-linked (GlcNAc...) asparagine glycan. A phosphoserine mark is found at Ser407 and Ser556. Thr557 is subject to Phosphothreonine. Over residues 563-572 (TPKEAAHHAG) the composition is skewed to basic and acidic residues. A helical transmembrane segment spans residues 609–629 (LASILFLYCACMSPVITFGGL). The Cytoplasmic segment spans residues 630 to 637 (LGEATEGR). A helical transmembrane segment spans residues 638–658 (ISAIESLFGASLTGIAYSLFA). Over 659–695 (GQPLTILGSTGPVLVFEKILYKFCRDYQLSYLSLRTS) the chain is Extracellular. Residues 696 to 716 (IGLWTSFLCIVLVATDASSLV) traverse the membrane as a helical segment. The Cytoplasmic portion of the chain corresponds to 717 to 725 (CYITRFTEE). Residues 726–746 (AFAALICIIFIYEALEKLFDL) form a helical membrane-spanning segment. Lys742 is subject to Phosphoserine. The Extracellular segment spans residues 747 to 817 (GETYAFNMHN…VFLGSACGHH (71 aa)). A disulfide bridge connects residues Cys766 and Cys768. Phosphoserine is present on residues Pro771 and Pro774. N-linked (GlcNAc...) asparagine glycosylation is present at Asn776. Ala780 is subject to Phosphoserine. 2 N-linked (GlcNAc...) asparagine glycosylation sites follow: Asn786 and Asn791. Residues Cys802 and Cys814 are joined by a disulfide bond. A helical membrane pass occupies residues 818–838 (GPYIPDVLFWCVILFFTTFFL). Topologically, residues 839 to 861 (SSFLKQFKTKRYFPTKVRSTISD) are cytoplasmic. A helical transmembrane segment spans residues 862–882 (FAVFLTIVIMVTIDYLVGVPS). Over 883–908 (PKLHVPEKFEPTHPERGWIISPLGDN) the chain is Extracellular. Residues 909–929 (PWWTLLIAAIPALLCTILIFM) traverse the membrane as a helical segment. At 930-954 (DQQITAVIINRKEHKLKKGAGYHLD) the chain is on the cytoplasmic side. The helical transmembrane segment at 955 to 975 (LLMVGVMLGVCSVMGLPWFVA) threads the bilayer. The Extracellular portion of the chain corresponds to 976 to 1011 (ATVLSISHVNSLKVESECSAPGEQPKFLGIREQRVT). Glu1007, Val1010, and Phe1016 each carry phosphoserine. 2 essential for cell membrane localization and transport activity regions span residues 1008-1131 (QRVT…KREL) and 1127-1214 (TKRE…ETSL). The chain crosses the membrane as a helical span at residues 1012 to 1032 (GLMIFILMGLSVFMTSVLKFI). The Cytoplasmic segment spans residues 1033–1034 (PM). The helical transmembrane segment at 1035-1055 (PVLYGVFLYMGVSSLKGIQLF) threads the bilayer. At 1056 to 1092 (DRIKLFGMPAKHQPDLIYLRYVPLWKVHIFTVIQLTC) the chain is on the extracellular side. Tyr1073, Val1077, Ser1102, Ala1105, Val1106, Pro1109, Met1111, and Leu1115 each carry phosphoserine. The helical transmembrane segment at 1093–1113 (LVLLWVIKVSAAAVVFPMMVL) threads the bilayer. Topologically, residues 1114 to 1214 (ALVFVRKLMD…KKYVDAETSL (101 aa)) are cytoplasmic. The interval 1134–1136 (LDD) is CA2-binding. The segment covering 1144–1162 (KKEDDKKKKEKEEAERMLQ) has biased composition (basic and acidic residues). The segment at 1144 to 1169 (KKEDDKKKKEKEEAERMLQDDDDTVH) is disordered. Position 1167 is a phosphothreonine (Thr1167). Residues Ser1176, Ser1188, Asp1201, and Ser1213 each carry the phosphoserine modification. The short motif at 1211 to 1214 (ETSL) is the PDZ-binding element.

The protein belongs to the anion exchanger (TC 2.A.31) family. In terms of assembly, interacts with CFTR through NHERF1/EBP50. Interacts with USH1C. Forms a complex with ATP6V1B1 and NHERF1/EBP50. Interacts in a pH dependent-manner with CA2/carbonic anhydrase 2. Highly expressed in testis and spleen. Also expressed in retina, colon, small intestine, ovary, thymus, prostate, muscle, heart and kidney. As to expression, expressed in skeletal muscle and heart muscle.

It is found in the basolateral cell membrane. The protein resides in the apical cell membrane. It localises to the cell projection. Its subcellular location is the stereocilium. The protein localises to the cell membrane. The catalysed reaction is hydrogencarbonate(in) + Na(+)(in) = hydrogencarbonate(out) + Na(+)(out). Its activity is regulated as follows. Transporter activity is regulated by CA2/carbonic anhydrase 2, cAMP and PKA. Insensitive to stilbene derivatives. Inhibited by 5-(N-ethyl-N-isopropyl)-amiloride (EIPA). Electroneutral sodium- and bicarbonate-dependent cotransporter with a Na(+):HCO3(-) 1:1 stoichiometry. Mediates the sodium-dependent bicarbonate transport important for pH recovery after acid load as well as for regulation of steady-state pH in the duodenum and vascular smooth muscle cells. Plays a key role in macrophage acidification, mediating bicarbonate import into the cytoplasm which is crucial for net acid extrusion and maintenance of cytoplasmic pH during phagocytosis. Provides cellular bicarbonate for de novo purine and pyrimidine synthesis and is a key mediator of de novo nucleotide synthesis downstream of mTORC1 signaling in proliferating cells. Its function is as follows. Plays a key role in macrophage acidification, mediating bicarbonate import into the cytoplasm which is crucial for net acid extrusion and maintenance of cytoplasmic pH during phagocytosis. The sequence is that of Sodium bicarbonate cotransporter 3 (SLC4A7) from Homo sapiens (Human).